Consider the following 249-residue polypeptide: Proteasome activator complex subunit 1 (249 aa).

Residues 60-102 (PLDIPVPDPVKEKEKEERKKQQEKEEKDEKKKGDEDDKGPPCG) form a disordered region. The segment covering 68-98 (PVKEKEKEERKKQQEKEEKDEKKKGDEDDKG) has biased composition (basic and acidic residues).

This sequence belongs to the PA28 family. In terms of assembly, heterodimer of PSME1 and PSME2, which forms a hexameric ring. PSME1 can form homoheptamers.

Functionally, implicated in immunoproteasome assembly and required for efficient antigen processing. The PA28 activator complex enhances the generation of class I binding peptides by altering the cleavage pattern of the proteasome. The sequence is that of Proteasome activator complex subunit 1 (Psme1) from Rattus norvegicus (Rat).